Here is a 162-residue protein sequence, read N- to C-terminus: Phosphopantetheine adenylyltransferase (162 aa).

Substrate is bound at residue serine 11. ATP is bound by residues serine 11–phenylalanine 12 and histidine 19. Substrate contacts are provided by lysine 43, valine 76, and arginine 90. ATP is bound by residues glycine 91 to arginine 93, glutamate 101, and histidine 126 to serine 132.

It belongs to the bacterial CoaD family. In terms of assembly, homohexamer. Mg(2+) is required as a cofactor.

It is found in the cytoplasm. It carries out the reaction (R)-4'-phosphopantetheine + ATP + H(+) = 3'-dephospho-CoA + diphosphate. It functions in the pathway cofactor biosynthesis; coenzyme A biosynthesis; CoA from (R)-pantothenate: step 4/5. Functionally, reversibly transfers an adenylyl group from ATP to 4'-phosphopantetheine, yielding dephospho-CoA (dPCoA) and pyrophosphate. In Streptococcus pneumoniae (strain CGSP14), this protein is Phosphopantetheine adenylyltransferase.